Consider the following 292-residue polypeptide: Ribosome-inactivating protein saporin-2 (292 aa).

An N-terminal signal peptide occupies residues 1–24 (MKIYVVATIAWILLQFSAWTTTDA). Glu-200 is a catalytic residue.

The protein belongs to the ribosome-inactivating protein family. Type 1 RIP subfamily.

The catalysed reaction is Endohydrolysis of the N-glycosidic bond at one specific adenosine on the 28S rRNA.. In terms of biological role, ribosome-inactivating protein of type 1, inhibits protein synthesis in animal cells. Useful as immunotoxin for pharmacological applications. This Saponaria officinalis (Common soapwort) protein is Ribosome-inactivating protein saporin-2 (SAP2).